Reading from the N-terminus, the 520-residue chain is ADP,ATP carrier protein 4 (520 aa).

12 helical membrane passes run 43-63 (LSKF…QNLI), 80-100 (ISFL…AIYV), 111-131 (IFYL…YVIF), 166-186 (FSLF…LLFW), 201-221 (FYPL…QFLE), 240-260 (FHTL…IVGI), 305-325 (LIAT…GPWK), 339-359 (AAFI…FVVL), 370-390 (FTAA…FFAV), 399-419 (LIVA…IGAI), 462-482 (LGKS…PSAS), and 485-505 (SISV…FWAV).

This sequence belongs to the ADP/ATP translocase tlc family.

It is found in the cell membrane. Provides the rickettsial cell with host ATP in exchange for rickettsial ADP. This is an obligate exchange system. This energy acquiring activity is an important component of rickettsial parasitism. The protein is ADP,ATP carrier protein 4 (tlcD) of Rickettsia bellii (strain RML369-C).